The primary structure comprises 506 residues: MISAIEPKNLLRPHSQPVVTTSTLQPDDECNIELRIEDTTVDKYPAKQHARRVAAEIHRDRGLVYLMGQKSTLYEDSDQERTFRQRRYFFYMSGVDEPDCDLTYDINADKLTLYVPDFDLKRTIWMGPTLGREEALQRFDIDEVKYQSSLDEDVKQWAQNQGRGSTLYLLHESQKPAEKVPNVFIDSKTLKQAMDTSRAIKDEHEIGLIRRANEVSAAAHIDVLRGIRKMSNERDIEASFLNTSVSLGAHKQAYHIIAASGSNAATLHYSKNNEPLKGRQFVCLDAGAEWNCYASDVTRTFPMTSQWPSAEAKHIYKLVEHMQESCMVRVKEGVRYLDLHILAHRSLIRGFLTLGIFKGGTLEEIQNSGASNLFFPHGLGHHIGLEVHDVSPESIMAQDNGDYSDNVLISPNNLSPCTTSSPTLKSGMVVTIEPGIYFSQIALDNAKPEQVKYVDLELVKTYMPVGGVRIEDDILVTKTGYENLTTAPKGDGMLEIIRQGDGSCNI.

Aspartate 285, aspartate 296, glutamate 433, and glutamate 471 together coordinate Mn(2+).

Belongs to the peptidase M24B family. The cofactor is Mn(2+).

The catalysed reaction is Release of any N-terminal amino acid, including proline, that is linked to proline, even from a dipeptide or tripeptide.. Catalyzes the removal of a penultimate prolyl residue from the N-termini of peptides. The polypeptide is Probable Xaa-Pro aminopeptidase BDBG_08406 (Blastomyces gilchristii (strain SLH14081) (Blastomyces dermatitidis)).